The following is a 412-amino-acid chain: 46 kDa FK506-binding nuclear protein (412 aa).

Acidic residues-rich tracts occupy residues E95 to A113, G169 to D178, and E188 to E216. Positions E95–I304 are disordered. Basic residues predominate over residues K247–L257. Residues D271 to Q303 are compositionally biased toward basic and acidic residues. Positions G324–K412 constitute a PPIase FKBP-type domain.

It belongs to the FKBP-type PPIase family. Phosphorylated by a nuclear kinase in the presence of Mg(2+) and ATP.

Its subcellular location is the nucleus. It carries out the reaction [protein]-peptidylproline (omega=180) = [protein]-peptidylproline (omega=0). With respect to regulation, inhibited by both FK506 and rapamycin. In terms of biological role, PPIases accelerate the folding of proteins. It catalyzes the cis-trans isomerization of proline imidic peptide bonds in oligopeptides. Binds double-stranded DNA in vitro. This is 46 kDa FK506-binding nuclear protein (FKBP46) from Spodoptera frugiperda (Fall armyworm).